The primary structure comprises 134 residues: Profilin-3 (134 aa).

A disulfide bridge connects residues Cys13 and Cys118. The Involved in PIP2 interaction signature appears at 84–100 (AVIRGKKGSGGITIKKT). A Phosphothreonine modification is found at Thr114.

The protein belongs to the profilin family. Occurs in many kinds of cells as a complex with monomeric actin in a 1:1 ratio. Post-translationally, phosphorylated by MAP kinases.

The protein localises to the cytoplasm. It localises to the cytoskeleton. In terms of biological role, binds to actin and affects the structure of the cytoskeleton. At high concentrations, profilin prevents the polymerization of actin, whereas it enhances it at low concentrations. This Olea europaea (Common olive) protein is Profilin-3.